Here is a 39-residue protein sequence, read N- to C-terminus: Decorsin (39 aa).

The interval 27–38 is high affinity binding domain; that stretch reads CRFPRGDADPYC. The Cell attachment site signature appears at 31 to 33; sequence RGD.

Belongs to the ornatin family.

Its subcellular location is the secreted. Functionally, inhibits fibrinogen interaction with platelet receptors expressed on glycoprotein IIb-IIIa complex. May prevent blood from clotting during either feeding and/or storage of ingested blood. This chain is Decorsin, found in Macrobdella decora (North American leech).